The chain runs to 492 residues: N-succinylglutamate 5-semialdehyde dehydrogenase (492 aa).

Residue Gly220–Gly225 participates in NAD(+) binding. Residues Glu243 and Cys277 contribute to the active site.

Belongs to the aldehyde dehydrogenase family. AstD subfamily.

It carries out the reaction N-succinyl-L-glutamate 5-semialdehyde + NAD(+) + H2O = N-succinyl-L-glutamate + NADH + 2 H(+). Its pathway is amino-acid degradation; L-arginine degradation via AST pathway; L-glutamate and succinate from L-arginine: step 4/5. Catalyzes the NAD-dependent reduction of succinylglutamate semialdehyde into succinylglutamate. This chain is N-succinylglutamate 5-semialdehyde dehydrogenase, found in Escherichia coli O81 (strain ED1a).